The following is a 355-amino-acid chain: RNA 3'-terminal phosphate cyclase (355 aa).

ATP is bound by residues glutamine 100 and 300–304; that span reads HLADQ. Histidine 325 serves as the catalytic Tele-AMP-histidine intermediate.

It belongs to the RNA 3'-terminal cyclase family. Type 1 subfamily.

Its subcellular location is the cytoplasm. It catalyses the reaction a 3'-end 3'-phospho-ribonucleotide-RNA + ATP = a 3'-end 2',3'-cyclophospho-ribonucleotide-RNA + AMP + diphosphate. Functionally, catalyzes the conversion of 3'-phosphate to a 2',3'-cyclic phosphodiester at the end of RNA. The mechanism of action of the enzyme occurs in 3 steps: (A) adenylation of the enzyme by ATP; (B) transfer of adenylate to an RNA-N3'P to produce RNA-N3'PP5'A; (C) and attack of the adjacent 2'-hydroxyl on the 3'-phosphorus in the diester linkage to produce the cyclic end product. The biological role of this enzyme is unknown but it is likely to function in some aspects of cellular RNA processing. This is RNA 3'-terminal phosphate cyclase from Methanosarcina acetivorans (strain ATCC 35395 / DSM 2834 / JCM 12185 / C2A).